A 283-amino-acid polypeptide reads, in one-letter code: GTPase Era (283 aa).

The Era-type G domain occupies 7 to 175; that stretch reads YCGHVIIVGK…KNIIKSYLPE (169 aa). The segment at 15–22 is G1; it reads GKANVGKS. Residue 15 to 22 coordinates GTP; sequence GKANVGKS. A G2 region spans residues 41–45; the sequence is NTTQS. Positions 62-65 are G3; sequence DTPG. GTP is bound by residues 62-66 and 124-127; these read DTPGV and NKID. Residues 124 to 127 are G4; the sequence is NKID. A G5 region spans residues 154-156; that stretch reads ISA. The KH type-2 domain occupies 198 to 283; that stretch reads IREQLILFLG…HLVLWVKDKN (86 aa).

This sequence belongs to the TRAFAC class TrmE-Era-EngA-EngB-Septin-like GTPase superfamily. Era GTPase family. Monomer.

The protein resides in the cytoplasm. It localises to the cell membrane. Functionally, an essential GTPase that binds both GDP and GTP, with rapid nucleotide exchange. Plays a role in 16S rRNA processing and 30S ribosomal subunit biogenesis and possibly also in cell cycle regulation and energy metabolism. The polypeptide is GTPase Era (Buchnera aphidicola subsp. Acyrthosiphon pisum (strain Tuc7)).